The primary structure comprises 75 residues: UPF0352 protein YejL (75 aa).

Belongs to the UPF0352 family.

This Escherichia coli O127:H6 (strain E2348/69 / EPEC) protein is UPF0352 protein YejL.